The chain runs to 282 residues: Peptidoglycan-recognition protein LD (282 aa).

Positions 1 to 29 are disordered; sequence MDSSHIAVRVARRSPSPAAVSQSSYGSLG. The Cytoplasmic segment spans residues 1 to 88; sequence MDSSHIAVRV…RRNPTLHEDC (88 aa). Residues 89 to 111 form a helical membrane-spanning segment; it reads FNWRSVGLLVMCASALALAAYLL. Over 112–282 the chain is Extracellular; sequence WRQTQTPDFG…PHYASHQTSK (171 aa). An intrachain disulfide couples Cys162 to Cys166. N-linked (GlcNAc...) asparagine glycosylation is present at Asn222.

It belongs to the N-acetylmuramoyl-L-alanine amidase 2 family. As to expression, expressed in uninduced hemocytes and mbn-2 cells.

The protein localises to the cell membrane. Functionally, peptidoglycan-recognition protein probably involved in innate immunity by binding to peptidoglycans (PGN) of bacteria and activating the immune response. The chain is Peptidoglycan-recognition protein LD (PGRP-LD) from Drosophila melanogaster (Fruit fly).